The chain runs to 312 residues: Transcription initiation factor IIB 1 (312 aa).

The TFIIB-type zinc-finger motif lies at 12–43 (EIERCPECGSTNLIRDYEHGELVCGECGAVIE). The Zn(2+) site is built by Cys16, Cys19, Cys35, and Cys38. 2 consecutive repeat copies span residues 129–212 (QELE…SRYL) and 223–304 (DYIS…ELTE).

This sequence belongs to the TFIIB family.

In terms of biological role, stabilizes TBP binding to an archaeal box-A promoter. Also responsible for recruiting RNA polymerase II to the pre-initiation complex (DNA-TBP-TFIIB). In Thermoplasma volcanium (strain ATCC 51530 / DSM 4299 / JCM 9571 / NBRC 15438 / GSS1), this protein is Transcription initiation factor IIB 1.